Consider the following 140-residue polypeptide: ATP synthase epsilon chain (140 aa).

The protein belongs to the ATPase epsilon chain family. As to quaternary structure, F-type ATPases have 2 components, CF(1) - the catalytic core - and CF(0) - the membrane proton channel. CF(1) has five subunits: alpha(3), beta(3), gamma(1), delta(1), epsilon(1). CF(0) has three main subunits: a, b and c.

It is found in the cell inner membrane. Its function is as follows. Produces ATP from ADP in the presence of a proton gradient across the membrane. This Legionella pneumophila (strain Paris) protein is ATP synthase epsilon chain.